The sequence spans 452 residues: Maltoporin (452 aa).

Positions 1-25 (MMITLRKLPLAVAVAAGVMSAQAMA) are cleaved as a signal peptide.

The protein belongs to the porin LamB (TC 1.B.3) family. In terms of assembly, homotrimer formed of three 18-stranded antiparallel beta-barrels, containing three independent channels.

It localises to the cell outer membrane. The catalysed reaction is beta-maltose(in) = beta-maltose(out). In terms of biological role, involved in the transport of maltose and maltodextrins. The polypeptide is Maltoporin (Salmonella newport (strain SL254)).